The sequence spans 207 residues: Small ribosomal subunit protein uS4A (207 aa).

An S4 RNA-binding domain is found at 98–158 (TRLDNVAYRL…EKSKSSAKFK (61 aa)).

The protein belongs to the universal ribosomal protein uS4 family. In terms of assembly, part of the 30S ribosomal subunit. Contacts protein S5. The interaction surface between S4 and S5 is involved in control of translational fidelity.

One of the primary rRNA binding proteins, it binds directly to 16S rRNA where it nucleates assembly of the body of the 30S subunit. In terms of biological role, with S5 and S12 plays an important role in translational accuracy. The polypeptide is Small ribosomal subunit protein uS4A (Alkaliphilus oremlandii (strain OhILAs) (Clostridium oremlandii (strain OhILAs))).